The sequence spans 348 residues: Phosphoribosylformylglycinamidine cyclo-ligase (348 aa).

Belongs to the AIR synthase family.

Its subcellular location is the cytoplasm. The catalysed reaction is 2-formamido-N(1)-(5-O-phospho-beta-D-ribosyl)acetamidine + ATP = 5-amino-1-(5-phospho-beta-D-ribosyl)imidazole + ADP + phosphate + H(+). It participates in purine metabolism; IMP biosynthesis via de novo pathway; 5-amino-1-(5-phospho-D-ribosyl)imidazole from N(2)-formyl-N(1)-(5-phospho-D-ribosyl)glycinamide: step 2/2. The sequence is that of Phosphoribosylformylglycinamidine cyclo-ligase from Roseobacter denitrificans (strain ATCC 33942 / OCh 114) (Erythrobacter sp. (strain OCh 114)).